Reading from the N-terminus, the 222-residue chain is Probable GTP-binding protein EngB (222 aa).

The region spanning 23–217 (NASEIVFLGR…REEIVKYTLG (195 aa)) is the EngB-type G domain. Residues 31-38 (GRSNVGKS), 57-61 (GKTQL), 82-85 (DLPG), 152-155 (TKAD), and 191-193 (FSA) contribute to the GTP site. 2 residues coordinate Mg(2+): S38 and T59.

The protein belongs to the TRAFAC class TrmE-Era-EngA-EngB-Septin-like GTPase superfamily. EngB GTPase family. Requires Mg(2+) as cofactor.

Necessary for normal cell division and for the maintenance of normal septation. This is Probable GTP-binding protein EngB from Helicobacter hepaticus (strain ATCC 51449 / 3B1).